A 228-amino-acid polypeptide reads, in one-letter code: 2,3-bisphosphoglycerate-dependent phosphoglycerate mutase (228 aa).

Substrate-binding positions include 8-15 (RHGQSEWN), 21-22 (TG), Arg-60, 87-90 (ERHY), Lys-98, 114-115 (RR), and 183-184 (GN). His-9 serves as the catalytic Tele-phosphohistidine intermediate. Glu-87 acts as the Proton donor/acceptor in catalysis.

This sequence belongs to the phosphoglycerate mutase family. BPG-dependent PGAM subfamily.

It carries out the reaction (2R)-2-phosphoglycerate = (2R)-3-phosphoglycerate. Its pathway is carbohydrate degradation; glycolysis; pyruvate from D-glyceraldehyde 3-phosphate: step 3/5. In terms of biological role, catalyzes the interconversion of 2-phosphoglycerate and 3-phosphoglycerate. This chain is 2,3-bisphosphoglycerate-dependent phosphoglycerate mutase, found in Staphylococcus epidermidis (strain ATCC 12228 / FDA PCI 1200).